Here is a 126-residue protein sequence, read N- to C-terminus: Small ribosomal subunit protein bS6 (126 aa).

The protein belongs to the bacterial ribosomal protein bS6 family.

In terms of biological role, binds together with bS18 to 16S ribosomal RNA. In Bordetella bronchiseptica (strain ATCC BAA-588 / NCTC 13252 / RB50) (Alcaligenes bronchisepticus), this protein is Small ribosomal subunit protein bS6.